We begin with the raw amino-acid sequence, 529 residues long: Probable serine carboxypeptidase ARB_06414 (529 aa).

The N-terminal stretch at 1-19 is a signal peptide; that stretch reads MRGLSYFVLALSAIDAAAA. The disordered stretch occupies residues 171-191; it reads PTDDNPSRPVGTGFSQGKPSV. Ser225 is a catalytic residue. N-linked (GlcNAc...) asparagine glycans are attached at residues Asn284 and Asn377. Residue Asp434 is part of the active site. N-linked (GlcNAc...) asparagine glycans are attached at residues Asn440 and Asn448. Residue His503 is part of the active site.

Belongs to the peptidase S10 family.

It localises to the secreted. In terms of biological role, removes acidic, neutral and basic amino acids as well as proline from the C-terminal position. The chain is Probable serine carboxypeptidase ARB_06414 from Arthroderma benhamiae (strain ATCC MYA-4681 / CBS 112371) (Trichophyton mentagrophytes).